The primary structure comprises 370 residues: Quinolinate synthase (370 aa).

The iminosuccinate site is built by His62 and Ser83. A [4Fe-4S] cluster-binding site is contributed by Cys128. Iminosuccinate is bound by residues 154–156 (YAN) and Ser171. A [4Fe-4S] cluster-binding site is contributed by Cys215. Iminosuccinate-binding positions include 241–243 (HPE) and Thr258. Residue Cys312 participates in [4Fe-4S] cluster binding.

The protein belongs to the quinolinate synthase family. Type 1 subfamily. Requires [4Fe-4S] cluster as cofactor.

The protein localises to the cytoplasm. The catalysed reaction is iminosuccinate + dihydroxyacetone phosphate = quinolinate + phosphate + 2 H2O + H(+). It participates in cofactor biosynthesis; NAD(+) biosynthesis; quinolinate from iminoaspartate: step 1/1. Its function is as follows. Catalyzes the condensation of iminoaspartate with dihydroxyacetone phosphate to form quinolinate. The sequence is that of Quinolinate synthase from Neisseria meningitidis serogroup A / serotype 4A (strain DSM 15465 / Z2491).